The chain runs to 117 residues: Ribonuclease P protein component (117 aa).

The protein belongs to the RnpA family. As to quaternary structure, consists of a catalytic RNA component (M1 or rnpB) and a protein subunit.

It catalyses the reaction Endonucleolytic cleavage of RNA, removing 5'-extranucleotides from tRNA precursor.. In terms of biological role, RNaseP catalyzes the removal of the 5'-leader sequence from pre-tRNA to produce the mature 5'-terminus. It can also cleave other RNA substrates such as 4.5S RNA. The protein component plays an auxiliary but essential role in vivo by binding to the 5'-leader sequence and broadening the substrate specificity of the ribozyme. This Aliivibrio salmonicida (strain LFI1238) (Vibrio salmonicida (strain LFI1238)) protein is Ribonuclease P protein component.